A 397-amino-acid polypeptide reads, in one-letter code: Elongation factor Tu (397 aa).

A tr-type G domain is found at 10–207; that stretch reads KPHVNIGTIG…AVDESIPDPV (198 aa). The interval 19 to 26 is G1; the sequence is GHVDHGKT. Position 19–26 (19–26) interacts with GTP; sequence GHVDHGKT. Residue Thr-26 coordinates Mg(2+). A G2 region spans residues 63–67; the sequence is GITIN. Residues 84–87 form a G3 region; the sequence is DAPG. GTP contacts are provided by residues 84 to 88 and 139 to 142; these read DAPGH and NKAD. A G4 region spans residues 139-142; sequence NKAD. Positions 177-179 are G5; it reads SGL.

It belongs to the TRAFAC class translation factor GTPase superfamily. Classic translation factor GTPase family. EF-Tu/EF-1A subfamily. Monomer.

It is found in the cytoplasm. The catalysed reaction is GTP + H2O = GDP + phosphate + H(+). In terms of biological role, GTP hydrolase that promotes the GTP-dependent binding of aminoacyl-tRNA to the A-site of ribosomes during protein biosynthesis. The protein is Elongation factor Tu of Tropheryma whipplei (strain Twist) (Whipple's bacillus).